A 190-amino-acid polypeptide reads, in one-letter code: Threonylcarbamoyl-AMP synthase (190 aa).

Residues 7-190 form the YrdC-like domain; sequence GDAIAAAIDV…ALTGELFRQG (184 aa).

The protein belongs to the SUA5 family. TsaC subfamily.

It is found in the cytoplasm. It carries out the reaction L-threonine + hydrogencarbonate + ATP = L-threonylcarbamoyladenylate + diphosphate + H2O. Its function is as follows. Required for the formation of a threonylcarbamoyl group on adenosine at position 37 (t(6)A37) in tRNAs that read codons beginning with adenine. Catalyzes the conversion of L-threonine, HCO(3)(-)/CO(2) and ATP to give threonylcarbamoyl-AMP (TC-AMP) as the acyladenylate intermediate, with the release of diphosphate. In Escherichia coli O157:H7, this protein is Threonylcarbamoyl-AMP synthase.